The following is a 234-amino-acid chain: Leucyl/phenylalanyl-tRNA--protein transferase (234 aa).

This sequence belongs to the L/F-transferase family.

The protein localises to the cytoplasm. It carries out the reaction N-terminal L-lysyl-[protein] + L-leucyl-tRNA(Leu) = N-terminal L-leucyl-L-lysyl-[protein] + tRNA(Leu) + H(+). The enzyme catalyses N-terminal L-arginyl-[protein] + L-leucyl-tRNA(Leu) = N-terminal L-leucyl-L-arginyl-[protein] + tRNA(Leu) + H(+). It catalyses the reaction L-phenylalanyl-tRNA(Phe) + an N-terminal L-alpha-aminoacyl-[protein] = an N-terminal L-phenylalanyl-L-alpha-aminoacyl-[protein] + tRNA(Phe). Its function is as follows. Functions in the N-end rule pathway of protein degradation where it conjugates Leu, Phe and, less efficiently, Met from aminoacyl-tRNAs to the N-termini of proteins containing an N-terminal arginine or lysine. In Tolumonas auensis (strain DSM 9187 / NBRC 110442 / TA 4), this protein is Leucyl/phenylalanyl-tRNA--protein transferase.